We begin with the raw amino-acid sequence, 722 residues long: uncharacterized protein (722 aa).

Active-site charge relay system residues include Ser-575, Asp-658, and His-691.

The protein belongs to the peptidase S9B family.

This is an uncharacterized protein from Rickettsia prowazekii (strain Madrid E).